Reading from the N-terminus, the 53-residue chain is Mitochondrial sheath formation-associated protein (53 aa).

Mitochondrial intermembrane-side segments run 1 to 6 and 1 to 7; these read MIVLGW and MIVLGWM. A run of 2 helical transmembrane segments spans residues 7 to 23 and 8 to 24; these read MLFV…PEAM and LFVG…EAMP. Cytoplasmic loops occupy residues 24–53 and 25–40; these read PPTL…ELLL and PTLK…ENKA.

Interacts with VDAC3. In terms of tissue distribution, testis specific. Detected only in germ cells at the step of spermiogenesis (at protein level). Expressed during the middle steps of spermatid development. As to expression, testis specific. Detected only in germ cells at the step of spermiogenesis (at protein level). Expressed in the late steps of spermatid development.

It localises to the mitochondrion outer membrane. Regulates sperm development. May be involved in mitochondrial sheath formation. The chain is Mitochondrial sheath formation-associated protein from Mus musculus (Mouse).